The primary structure comprises 329 residues: Phenylalanine--tRNA ligase alpha subunit (329 aa).

Glu-246 lines the Mg(2+) pocket.

This sequence belongs to the class-II aminoacyl-tRNA synthetase family. Phe-tRNA synthetase alpha subunit type 1 subfamily. As to quaternary structure, tetramer of two alpha and two beta subunits. The cofactor is Mg(2+).

Its subcellular location is the cytoplasm. It catalyses the reaction tRNA(Phe) + L-phenylalanine + ATP = L-phenylalanyl-tRNA(Phe) + AMP + diphosphate + H(+). The sequence is that of Phenylalanine--tRNA ligase alpha subunit from Helicobacter hepaticus (strain ATCC 51449 / 3B1).